Here is a 146-residue protein sequence, read N- to C-terminus: Large ribosomal subunit protein uL13 (146 aa).

The protein belongs to the universal ribosomal protein uL13 family. In terms of assembly, part of the 50S ribosomal subunit.

Its function is as follows. This protein is one of the early assembly proteins of the 50S ribosomal subunit, although it is not seen to bind rRNA by itself. It is important during the early stages of 50S assembly. This chain is Large ribosomal subunit protein uL13, found in Malacoplasma penetrans (strain HF-2) (Mycoplasma penetrans).